The primary structure comprises 129 residues: UPF0325 protein ECA1027 (129 aa).

The protein belongs to the UPF0325 family.

The protein is UPF0325 protein ECA1027 of Pectobacterium atrosepticum (strain SCRI 1043 / ATCC BAA-672) (Erwinia carotovora subsp. atroseptica).